The primary structure comprises 822 residues: MSGWRKIYYKLLNLPLKLLVKSKVIPADPVTELGLDPSRPILYVLPYNSKADLLTLRAQCQAQDLPDPLIPLEIDGVQLPSHVFIDNGPRVFRYYAPKQESVKIFHDYLDLHRNNPELDIQMLPVSVMFGRSPGREGHGTPHLRVLNGVQKFFAVLWLGRDSFVRFSTTVSLRRMASEHGTDKTIAHKLARVARMHFSRQRLAAVGPSLPARQDLFKKLLTSKAIEKAVADEARTKKISHEKAQQNAITLMEEIAADFSYEAVRLSDRVLSWTWNRLYQGINVHNAERVRQLAQDGHEIVYVPCHRSHMDYLLLSYVLYHQGLVPPHIAAGINLNFWPAGPIFRRLGAFFIRRTFKGNKLYSTVFREYLGELFTRGYSVEYFVEGGRSRTGRLLEPKTGTLSMTIQAMLRGGSRPITLVPIYIGYEHVMEVGTYAKELRGATKEKESLLQMLRGLRKLRNLGQGYVNFGEPIPLTTYLNTNVPQWRDAIDPIEAQRPSWLTPAVNDLAGKIMVRINNAAAANAMNLCSTALLASRQRSLTREQLLEQLDCYLQLMRNVPYAKDVTVPDKTPEELLNHALNMNKFEVEKDNIGDIIILPREQAVLMTYYRNNIQHLLILPSLIASMVMYQRRITRAELLRQISMIYPMLKAELFLHYSKEQLPQTLDTLIDELARQQLICDKGSELVLNPARIRPLQLLAAGVRETLQRYAITLSLLSANPSINRGALEKESRIMAQRLSVLHGINAPEFFDKAVFSTLVGTLREEGYISDSGDAIQEHTLEVYNMLSALMTPEVKLTIESVSMPAETNNLLPEPEAEDKEEN.

Residues 304–309 carry the HXXXXD motif motif; the sequence is CHRSHM.

The protein belongs to the GPAT/DAPAT family.

The protein resides in the cell inner membrane. The enzyme catalyses sn-glycerol 3-phosphate + an acyl-CoA = a 1-acyl-sn-glycero-3-phosphate + CoA. Its pathway is phospholipid metabolism; CDP-diacylglycerol biosynthesis; CDP-diacylglycerol from sn-glycerol 3-phosphate: step 1/3. This chain is Glycerol-3-phosphate acyltransferase, found in Yersinia enterocolitica serotype O:8 / biotype 1B (strain NCTC 13174 / 8081).